The sequence spans 143 residues: 18.1 kDa class I heat shock protein (143 aa).

The 115-residue stretch at 29 to 143 (ENSAFVSTRI…PEVKSIEISS (115 aa)) folds into the sHSP domain.

It belongs to the small heat shock protein (HSP20) family. In terms of assembly, forms oligomeric structures.

Its subcellular location is the cytoplasm. In Medicago sativa (Alfalfa), this protein is 18.1 kDa class I heat shock protein (HSP18.1).